The following is a 488-amino-acid chain: MSLSTVNHAAAAAAAAAGPGKSFSAAAPAAPSVRLPRTRAPAAAAVSAAAVGADRAADRVSALSQVSGVLGSQWGDEGKGKLVDVLAPRFDIVARCQGGANAGHTIYNSEGKKFALHLVPSGILHEGTLCVVGNGAVIHVPGFFNEIDGLESNGVNCNGRILVSDRAHLLFDLHQAVDGLREAELANSFIGTTKRGIGPCYSSKVTRNGLRVCDLRHMDTFGDKLDVLFKDATSRFEGFEYSKSMLREEVERYKRFAERLEPFIADTVHLLNESIQQKKKILVEGGQATMLDIDFGTYPFVTSSSPSAGGICTGLGIAPRCIGDLIGVVKAYTTRVGSGPFPTELFGEEGDLLRKSGMEFGTTTGRPRRCGWLDIVALKYCCEINGFSSLNLTKLDVLSGLPEVKLGVSYNQPDGQKLQSFPGDLDTLEQVQVKYEVLPGWQSDISSVRSYSELPLAAQRYVERIEELVGVPVHYIGVGPGRDALIYK.

A chloroplast-targeting transit peptide spans 1 to 47 (MSLSTVNHAAAAAAAAAGPGKSFSAAAPAAPSVRLPRTRAPAAAAVS). GTP is bound by residues 75–81 (GDEGKGK) and 103–105 (GHT). D76 (proton acceptor) is an active-site residue. 2 residues coordinate Mg(2+): D76 and G103. IMP-binding positions include 76-79 (DEGK), 101-104 (NAGH), T193, R207, Q287, T302, and R366. The Proton donor role is filled by H104. 362–368 (TTTGRPR) serves as a coordination point for substrate. GTP is bound by residues R368, 394 to 396 (KLD), and 477 to 479 (GVG).

This sequence belongs to the adenylosuccinate synthetase family. As to quaternary structure, homodimer. Requires Mg(2+) as cofactor.

It localises to the plastid. It is found in the chloroplast. It catalyses the reaction IMP + L-aspartate + GTP = N(6)-(1,2-dicarboxyethyl)-AMP + GDP + phosphate + 2 H(+). The protein operates within purine metabolism; AMP biosynthesis via de novo pathway; AMP from IMP: step 1/2. Functionally, plays an important role in the de novo pathway and in the salvage pathway of purine nucleotide biosynthesis. Catalyzes the first committed step in the biosynthesis of AMP from IMP. This chain is Adenylosuccinate synthetase 1, chloroplastic, found in Oryza sativa subsp. japonica (Rice).